Consider the following 701-residue polypeptide: Arachidonate 12-lipoxygenase, 12R-type (701 aa).

Residues 2–119 enclose the PLAT domain; the sequence is ATYKVKVATG…TLSLREATGK (118 aa). The region spanning 120–701 is the Lipoxygenase domain; it reads TTADDTLPIL…PVLIENSISI (582 aa). The Fe cation site is built by H398, H403, H578, N582, and I701.

This sequence belongs to the lipoxygenase family. Requires Fe cation as cofactor.

It localises to the cytoplasm. The protein resides in the perinuclear region. The catalysed reaction is (5Z,8Z,11Z,14Z)-eicosatetraenoate + O2 = (12R)-hydroperoxy-(5Z,8Z,10E,14Z)-eicosatetraenoate. The enzyme catalyses N-[omega-(9Z,12Z)-octadecadienoyloxy]acyl-beta-D-glucosyl-(1&lt;-&gt;1)-octadecasphing-4E-enine + O2 = N-[omega-(9R)-hydroperoxy-(10E,12Z)-octadecadienoyloxy]acyl-beta-D-glucosyl-(1&lt;-&gt;1)-octadecasphing-4E-enine. It catalyses the reaction a N-[omega-(9Z,12Z)-octadecadienoyloxy]-acylsphin-4E-enine + O2 = a N-[omega-(9R)-hydroperoxy-(10E,12Z)-octadecadienoyloxy]-acylsphin-4E-enine. It carries out the reaction (6Z,9Z,12Z)-octadecatrienoate + O2 = 10-hydroperoxy-(6Z,8E,12Z)-octadecatrienoate. The catalysed reaction is (4Z,7Z,10Z,13Z,16Z,19Z)-docosahexaenoate + O2 = 14-hydroperoxy-(4Z,7Z,10Z,12E,16Z,19Z)-docosahexaenoate. The enzyme catalyses (8Z,11Z,14Z)-eicosatrienoate + O2 = (8Z,10E,14Z)-12-hydroperoxyeicosatrienoate. It catalyses the reaction (5Z,8Z,11Z,14Z,17Z)-eicosapentaenoate + O2 = (5Z,7Z,8Z,10E,14Z,17Z)-12-hydroperoxyeicosapentaenoate. It carries out the reaction (6Z,9Z,12Z)-octadecatrienoate + O2 = 10R-hydroperoxy-(6Z,8E,12Z)-octadecatrienoate. The catalysed reaction is 1-O-methyl-(5Z,8Z,11Z,14Z)-eicosatetraenoate + O2 = 1-O-methyl (5Z,8Z,10E,12R,14Z)-hydroperoxyiecosatetraenoate. The enzyme catalyses 1-O-methyl-(5Z,8Z,11Z,14Z)-eicosatetraenoate + O2 = 1-O-methyl-8-hydroperoxy-(5Z,9E,11Z,14Z)-eicosatetraenoate. It catalyses the reaction 1-O-methyl-(5Z,8Z,11Z,14Z)-eicosatetraenoate + O2 = 1-O-methyl-(8R)-hydroperoxy-(5Z,9E,11Z,14Z)-eicosatrienoate. It carries out the reaction 1-O-methyl-(9Z,12Z)-octadecadienoate + O2 = 1-O-methyl-(9R)-hydroperoxy-(10E,12Z)-octadecadienoate. The catalysed reaction is 1-O-methyl-20-hydroxy-(5Z,8Z,11Z,14Z)-eicosatetraenoate + O2 = 1-O-methyl-8-hydroperoxy-20-hydroxy-(5Z,9E,11Z,14Z)-eicosatetraenoate. The enzyme catalyses 1-O-methyl-20-hydroxy-(5Z,8Z,11Z,14Z)-eicosatetraenoate + O2 = 1-O-methyl-12-hydroperoxy-20-hydroxy-(5Z,8Z,10E,14Z)-eicosatetraenoate. It catalyses the reaction 1-O-methyl-20-hydroxy-(5Z,8Z,11Z,14Z)-eicosatetraenoate + O2 = 1-O-methyl-9-hydroperoxy-20-hydroxy-(5Z,7E,11Z,14Z)-eicosatetraenoate. It carries out the reaction 1-O-methyl-(9Z,12Z)-octadecadienoate + O2 = 1-O-methyl-(13S)-hydroperoxy-(9Z,11E)-octadecadienoate. The protein operates within lipid metabolism; hydroperoxy eicosatetraenoic acid biosynthesis. Its pathway is lipid metabolism; sphingolipid metabolism. Increased by calcium. Its function is as follows. Catalyzes the regio and stereo-specific incorporation of a single molecule of dioxygen into free and esterified polyunsaturated fatty acids generating lipid hydroperoxides that can be further reduced to the corresponding hydroxy species. In the skin, acts upstream of ALOXE3 on the lineolate moiety of esterified omega-hydroxyacyl-sphingosine (EOS) ceramides to produce an epoxy-ketone derivative, a crucial step in the conjugation of omega-hydroxyceramide to membrane proteins. Therefore plays a crucial role in the synthesis of corneocytes lipid envelope and the establishment of the skin barrier to water loss. May also play a role in the regulation of the expression of airway mucins. The protein is Arachidonate 12-lipoxygenase, 12R-type of Rattus norvegicus (Rat).